We begin with the raw amino-acid sequence, 119 residues long: Large ribosomal subunit protein bL20 (119 aa).

The protein belongs to the bacterial ribosomal protein bL20 family.

Functionally, binds directly to 23S ribosomal RNA and is necessary for the in vitro assembly process of the 50S ribosomal subunit. It is not involved in the protein synthesizing functions of that subunit. The sequence is that of Large ribosomal subunit protein bL20 from Paracoccus denitrificans (strain Pd 1222).